We begin with the raw amino-acid sequence, 746 residues long: tRNA(Met) cytidine acetyltransferase TmcA (746 aa).

The tract at residues Ala-181–Glu-200 is disordered. ATP contacts are provided by residues Gln-202, Gly-228–Ile-237, and Arg-370. The N-acetyltransferase domain occupies Val-405–Pro-617. Acetyl-CoA contacts are provided by residues Ile-517–Val-519, Gln-524–Thr-530, Glu-557, and Arg-564.

It belongs to the RNA cytidine acetyltransferase family. TmcA subfamily.

It is found in the cytoplasm. It carries out the reaction cytidine(34) in elongator tRNA(Met) + acetyl-CoA + ATP + H2O = N(4)-acetylcytidine(34) in elongator tRNA(Met) + ADP + phosphate + CoA + H(+). Functionally, catalyzes the formation of N(4)-acetylcytidine (ac(4)C) at the wobble position of tRNA(Met), by using acetyl-CoA as an acetyl donor and ATP (or GTP). This Nitrosococcus halophilus (strain Nc4) protein is tRNA(Met) cytidine acetyltransferase TmcA.